The chain runs to 123 residues: UPF0102 protein mma_0204 (123 aa).

The protein belongs to the UPF0102 family.

This Janthinobacterium sp. (strain Marseille) (Minibacterium massiliensis) protein is UPF0102 protein mma_0204.